The chain runs to 454 residues: CCA-adding enzyme (454 aa).

Residues S59 and R62 each contribute to the ATP site. The CTP site is built by S59 and R62. Mg(2+) contacts are provided by D71, D73, and D125. ATP contacts are provided by H148, K167, and Y176. Positions 148, 167, and 176 each coordinate CTP.

It belongs to the tRNA nucleotidyltransferase/poly(A) polymerase family. Archaeal CCA-adding enzyme subfamily. Homodimer. Requires Mg(2+) as cofactor.

It carries out the reaction a tRNA precursor + 2 CTP + ATP = a tRNA with a 3' CCA end + 3 diphosphate. It catalyses the reaction a tRNA with a 3' CCA end + 2 CTP + ATP = a tRNA with a 3' CCACCA end + 3 diphosphate. Catalyzes the addition and repair of the essential 3'-terminal CCA sequence in tRNAs without using a nucleic acid template. Adds these three nucleotides in the order of C, C, and A to the tRNA nucleotide-73, using CTP and ATP as substrates and producing inorganic pyrophosphate. tRNA 3'-terminal CCA addition is required both for tRNA processing and repair. Also involved in tRNA surveillance by mediating tandem CCA addition to generate a CCACCA at the 3' terminus of unstable tRNAs. While stable tRNAs receive only 3'-terminal CCA, unstable tRNAs are marked with CCACCA and rapidly degraded. In Methanosarcina barkeri (strain Fusaro / DSM 804), this protein is CCA-adding enzyme.